The chain runs to 299 residues: ATP synthase gamma chain (299 aa).

It belongs to the ATPase gamma chain family. F-type ATPases have 2 components, CF(1) - the catalytic core - and CF(0) - the membrane proton channel. CF(1) has five subunits: alpha(3), beta(3), gamma(1), delta(1), epsilon(1). CF(0) has three main subunits: a, b and c.

The protein localises to the cell membrane. Functionally, produces ATP from ADP in the presence of a proton gradient across the membrane. The gamma chain is believed to be important in regulating ATPase activity and the flow of protons through the CF(0) complex. The sequence is that of ATP synthase gamma chain from Leifsonia xyli subsp. xyli (strain CTCB07).